Consider the following 380-residue polypeptide: Glycerate kinase (380 aa).

The protein belongs to the glycerate kinase type-1 family.

The catalysed reaction is (R)-glycerate + ATP = (2R)-3-phosphoglycerate + ADP + H(+). The polypeptide is Glycerate kinase (glxK) (Halalkalibacterium halodurans (strain ATCC BAA-125 / DSM 18197 / FERM 7344 / JCM 9153 / C-125) (Bacillus halodurans)).